A 269-amino-acid chain; its full sequence is Zinc transporter ZupT (269 aa).

8 helical membrane-spanning segments follow: residues 11-31, 40-60, 80-100, 125-145, 158-178, 187-207, 217-237, and 249-269; these read IALA…LLVL, LLAF…LSEI, YGTL…HFIP, ALLT…ATFF, AFAI…PVYF, FSAS…GYWL, FGWV…DELL, and TVYG…LFKW. Positions 136 and 139 each coordinate Fe(2+). Zn(2+) is bound by residues glutamate 139 and histidine 164. Residues asparagine 165, glutamate 168, and glutamate 197 each contribute to the Fe(2+) site. Glutamate 168 is a binding site for Zn(2+).

This sequence belongs to the ZIP transporter (TC 2.A.5) family. ZupT subfamily.

The protein resides in the cell inner membrane. It carries out the reaction Zn(2+)(in) = Zn(2+)(out). In terms of biological role, mediates zinc uptake. May also transport other divalent cations. The chain is Zinc transporter ZupT from Stenotrophomonas maltophilia (strain R551-3).